A 270-amino-acid chain; its full sequence is Endonuclease 4 (270 aa).

Zn(2+) contacts are provided by His-69, His-108, Glu-139, Asp-169, His-172, His-204, Asp-217, His-219, and Glu-248.

Belongs to the AP endonuclease 2 family. Zn(2+) serves as cofactor.

The catalysed reaction is Endonucleolytic cleavage to 5'-phosphooligonucleotide end-products.. Endonuclease IV plays a role in DNA repair. It cleaves phosphodiester bonds at apurinic or apyrimidinic (AP) sites, generating a 3'-hydroxyl group and a 5'-terminal sugar phosphate. In addition, possesses a 3'-5' exonuclease activity. In Thermus thermophilus (strain ATCC BAA-163 / DSM 7039 / HB27), this protein is Endonuclease 4.